The primary structure comprises 162 residues: RNA pyrophosphohydrolase (162 aa).

The Nudix hydrolase domain occupies 11–155; the sequence is PYRPCVGIVL…KRAVYEEVVA (145 aa). The Nudix box signature appears at 45–66; it reads GGIDEGEKPREAALRELWEETG.

Belongs to the Nudix hydrolase family. RppH subfamily. Requires a divalent metal cation as cofactor.

Its function is as follows. Accelerates the degradation of transcripts by removing pyrophosphate from the 5'-end of triphosphorylated RNA, leading to a more labile monophosphorylated state that can stimulate subsequent ribonuclease cleavage. The protein is RNA pyrophosphohydrolase of Cereibacter sphaeroides (strain ATCC 17029 / ATH 2.4.9) (Rhodobacter sphaeroides).